Consider the following 443-residue polypeptide: Serine/threonine-protein kinase ISR1 (443 aa).

One can recognise a Protein kinase domain in the interval 135-415 (LPSNKLVGQG…LRNDLFQDWK (281 aa)). ATP contacts are provided by residues 141-149 (VGQGSYSYV) and lysine 169. Aspartate 280 functions as the Proton acceptor in the catalytic mechanism.

The protein belongs to the protein kinase superfamily. Ser/Thr protein kinase family.

It catalyses the reaction L-seryl-[protein] + ATP = O-phospho-L-seryl-[protein] + ADP + H(+). The enzyme catalyses L-threonyl-[protein] + ATP = O-phospho-L-threonyl-[protein] + ADP + H(+). Functionally, probable serine/threonine protein kinase which may function redundantly with MPK1-independent branch of the PCK1 pathway that is presumed to be required for the tolerance to high temperatures and staurosporine. This chain is Serine/threonine-protein kinase ISR1 (ISR1), found in Saccharomyces cerevisiae (strain ATCC 204508 / S288c) (Baker's yeast).